Reading from the N-terminus, the 1173-residue chain is Fas-binding factor 1 (1173 aa).

The interval 17–168 (MALRTKKGLK…PSSSKTGLQY (152 aa)) is disordered. A compositionally biased stretch (basic and acidic residues) spans 46–56 (KPAEPASHAKD). Residues 80–93 (AGADAEASSVSDAD) are compositionally biased toward low complexity. Ser-172 carries the post-translational modification Phosphoserine. Disordered regions lie at residues 180-225 (LAGL…GDTP) and 241-566 (TTLG…SSRE). Positions 206–216 (SPGAAAGQGPS) are enriched in low complexity. Basic and acidic residues-rich tracts occupy residues 247-258 (DSPKAERKKTGD) and 287-299 (TGER…DKKY). Composition is skewed to polar residues over residues 331–345 (VASS…QSVS), 396–411 (SPVQ…MTPS), 468–477 (VISQKKSQNL), and 533–544 (TGSSMSWSQATT). Coiled coils occupy residues 617–742 (TAQL…QQAS), 808–917 (QQRE…MNKC), and 975–1057 (CELR…VQRQ). Lys-1002 participates in a covalent cross-link: Glycyl lysine isopeptide (Lys-Gly) (interchain with G-Cter in SUMO2). Positions 1091–1124 (ASLPGLPPRVQGPAASSRDAVQAPASSSPQCSQP) are disordered. Low complexity predominate over residues 1110–1124 (AVQAPASSSPQCSQP).

As to quaternary structure, interacts with PARD3. May interact with FAS cytoplasmic domain. Interacts with TRAPPC14. In terms of tissue distribution, broadly expressed.

The protein resides in the cytoplasm. The protein localises to the cytoskeleton. It localises to the microtubule organizing center. It is found in the centrosome. Its subcellular location is the centriole. The protein resides in the spindle pole. The protein localises to the cell junction. Its function is as follows. Keratin-binding protein required for epithelial cell polarization. Involved in apical junction complex (AJC) assembly via its interaction with PARD3. Required for ciliogenesis. The chain is Fas-binding factor 1 (Fbf1) from Mus musculus (Mouse).